The chain runs to 138 residues: Endoribonuclease YbeY (138 aa).

Zn(2+) is bound by residues histidine 106, histidine 110, and aspartate 116.

This sequence belongs to the endoribonuclease YbeY family. The cofactor is Zn(2+).

It localises to the cytoplasm. In terms of biological role, single strand-specific metallo-endoribonuclease involved in late-stage 70S ribosome quality control and in maturation of the 3' terminus of the 16S rRNA. In Phocaeicola vulgatus (strain ATCC 8482 / DSM 1447 / JCM 5826 / CCUG 4940 / NBRC 14291 / NCTC 11154) (Bacteroides vulgatus), this protein is Endoribonuclease YbeY.